The chain runs to 353 residues: ATP-dependent kinase YFH7 (353 aa).

31–39 lines the ATP pocket; that stretch reads GSPGSGKST.

This sequence belongs to the YFH7 family.

Its function is as follows. ATP-dependent kinase that could be involved in endoplasmic reticulum membrane assembly. The protein is ATP-dependent kinase YFH7 (YFH7) of Saccharomyces cerevisiae (strain ATCC 204508 / S288c) (Baker's yeast).